A 267-amino-acid polypeptide reads, in one-letter code: Mediator of RNA polymerase II transcription subunit 8 (267 aa).

Coiled-coil stretches lie at residues 2–27 (QQRE…KGSL) and 118–163 (VEEQ…EDRD). Residues 156–165 (NNPREDRDSE) are compositionally biased toward basic and acidic residues. Disordered stretches follow at residues 156–180 (NNPR…NPAD) and 227–267 (ASGH…PYNR). Residues 166-180 (TSALRQNKPSFNPAD) are compositionally biased toward polar residues. Residues 236-247 (GPVAPQQPGQPG) show a composition bias toward low complexity.

This sequence belongs to the Mediator complex subunit 8 family. In terms of assembly, component of the Mediator complex. May be part of a multisubunit E3 ubiquitin-protein ligase complex.

The protein localises to the nucleus. It functions in the pathway protein modification; protein ubiquitination. Component of the Mediator complex, a coactivator involved in the regulated transcription of nearly all RNA polymerase II-dependent genes. Mediator functions as a bridge to convey information from gene-specific regulatory proteins to the basal RNA polymerase II transcription machinery. Mediator is recruited to promoters by direct interactions with regulatory proteins and serves as a scaffold for the assembly of a functional preinitiation complex with RNA polymerase II and the general transcription factors. May play a role as a target recruitment subunit in E3 ubiquitin-protein ligase complexes and thus in ubiquitination and subsequent proteasomal degradation of target proteins. This chain is Mediator of RNA polymerase II transcription subunit 8 (med8), found in Danio rerio (Zebrafish).